Here is a 368-residue protein sequence, read N- to C-terminus: Aminomethyltransferase (368 aa).

Belongs to the GcvT family. As to quaternary structure, the glycine cleavage system is composed of four proteins: P, T, L and H.

It carries out the reaction N(6)-[(R)-S(8)-aminomethyldihydrolipoyl]-L-lysyl-[protein] + (6S)-5,6,7,8-tetrahydrofolate = N(6)-[(R)-dihydrolipoyl]-L-lysyl-[protein] + (6R)-5,10-methylene-5,6,7,8-tetrahydrofolate + NH4(+). In terms of biological role, the glycine cleavage system catalyzes the degradation of glycine. In Xylella fastidiosa (strain 9a5c), this protein is Aminomethyltransferase.